The chain runs to 265 residues: Hydroxyethylthiazole kinase (265 aa).

Met43 contributes to the substrate binding site. Lys118 and Thr165 together coordinate ATP. Gly192 serves as a coordination point for substrate.

Belongs to the Thz kinase family. The cofactor is Mg(2+).

It catalyses the reaction 5-(2-hydroxyethyl)-4-methylthiazole + ATP = 4-methyl-5-(2-phosphooxyethyl)-thiazole + ADP + H(+). The protein operates within cofactor biosynthesis; thiamine diphosphate biosynthesis; 4-methyl-5-(2-phosphoethyl)-thiazole from 5-(2-hydroxyethyl)-4-methylthiazole: step 1/1. Functionally, catalyzes the phosphorylation of the hydroxyl group of 4-methyl-5-beta-hydroxyethylthiazole (THZ). The polypeptide is Hydroxyethylthiazole kinase (Pyrococcus furiosus (strain ATCC 43587 / DSM 3638 / JCM 8422 / Vc1)).